A 274-amino-acid polypeptide reads, in one-letter code: ATP synthase subunit a (274 aa).

Helical transmembrane passes span 44 to 64 (VDSM…FYMV), 110 to 130 (FIWV…FPFI), 142 to 164 (IVPS…LILF), 212 to 232 (LFGN…LLPW), and 243 to 263 (AIFH…LTIV).

The protein belongs to the ATPase A chain family. As to quaternary structure, F-type ATPases have 2 components, CF(1) - the catalytic core - and CF(0) - the membrane proton channel. CF(1) has five subunits: alpha(3), beta(3), gamma(1), delta(1), epsilon(1). CF(0) has three main subunits: a(1), b(2) and c(9-12). The alpha and beta chains form an alternating ring which encloses part of the gamma chain. CF(1) is attached to CF(0) by a central stalk formed by the gamma and epsilon chains, while a peripheral stalk is formed by the delta and b chains.

The protein localises to the cell membrane. In terms of biological role, key component of the proton channel; it plays a direct role in the translocation of protons across the membrane. The chain is ATP synthase subunit a from Buchnera aphidicola subsp. Acyrthosiphon pisum (strain APS) (Acyrthosiphon pisum symbiotic bacterium).